The chain runs to 140 residues: ATP synthase epsilon chain (140 aa).

The protein belongs to the ATPase epsilon chain family. F-type ATPases have 2 components, CF(1) - the catalytic core - and CF(0) - the membrane proton channel. CF(1) has five subunits: alpha(3), beta(3), gamma(1), delta(1), epsilon(1). CF(0) has three main subunits: a, b and c.

The protein resides in the cell membrane. Functionally, produces ATP from ADP in the presence of a proton gradient across the membrane. This chain is ATP synthase epsilon chain, found in Dehalococcoides mccartyi (strain ATCC BAA-2100 / JCM 16839 / KCTC 5957 / BAV1).